The following is a 347-amino-acid chain: Haptoglobin (347 aa).

A signal peptide spans 1 to 18 (MRALGAVVTLLLWGQLFA). Residues 31 to 88 (DSCPKPPEIANGYVEHLVRYRCRQFYKLQTEGDGIYTLNSEKQWVNPAAGDKLPKCEA) enclose the Sushi domain. Cystine bridges form between C52–C86, C90–C207, C250–C281, and C292–C322. In terms of domain architecture, Peptidase S1 spans 103–345 (IIGGSMDAKG…LKDWVQETMA (243 aa)). Residues N148 and N152 are each glycosylated (N-linked (GlcNAc...) asparagine). Positions 259–264 (VPEKKG) are interaction with CD163.

The protein belongs to the peptidase S1 family. In terms of assembly, tetramer of two alpha and two beta chains; disulfide-linked. The hemoglobin/haptoglobin complex is composed of a haptoglobin dimer bound to two hemoglobin alpha-beta dimers. Interacts with CD163. Interacts with ERGIC3. Expressed by the liver and secreted in plasma.

The protein localises to the secreted. In terms of biological role, as a result of hemolysis, hemoglobin is found to accumulate in the kidney and is secreted in the urine. Haptoglobin captures, and combines with free plasma hemoglobin to allow hepatic recycling of heme iron and to prevent kidney damage. Haptoglobin also acts as an antioxidant, has antibacterial activity and plays a role in modulating many aspects of the acute phase response. Hemoglobin/haptoglobin complexes are rapidly cleared by the macrophage CD163 scavenger receptor expressed on the surface of liver Kupfer cells through an endocytic lysosomal degradation pathway. This chain is Haptoglobin (Hp), found in Rattus norvegicus (Rat).